Reading from the N-terminus, the 284-residue chain is MEMO1 family protein SSO0066 (284 aa).

The protein belongs to the MEMO1 family.

This is MEMO1 family protein SSO0066 from Saccharolobus solfataricus (strain ATCC 35092 / DSM 1617 / JCM 11322 / P2) (Sulfolobus solfataricus).